Consider the following 119-residue polypeptide: MNKLKRLSMLTVMIASVFIFSSHALAAQYYTVSTSSGAPVNMRSGPGTSWGIVTTIPSGTRIPIYCYKTGTTVTGKYGTSNIWNYTERTLASGEIVPGFVSDTYMYTGSDGPVVPKCSW.

Residues 1 to 26 form the signal peptide; sequence MNKLKRLSMLTVMIASVFIFSSHALA. Residues 30-104 form the SH3b domain; that stretch reads YTVSTSSGAP…IVPGFVSDTY (75 aa).

It to B.subtilis YraJ.

This is an uncharacterized protein from Bacillus subtilis (strain 168).